Here is a 327-residue protein sequence, read N- to C-terminus: ATP-dependent (S)-NAD(P)H-hydrate dehydratase (327 aa).

The region spanning 11–313 (LLTRVKRIIP…RHVGKAYNAL (303 aa)) is the YjeF C-terminal domain. Residues G121 and 174–180 (NVIEFKR) contribute to the (6S)-NADPHX site. ATP contacts are provided by residues 209–213 (KGQSD) and 228–237 (GGLKRCGGQG). D238 contacts (6S)-NADPHX.

The protein belongs to the NnrD/CARKD family. Mg(2+) is required as a cofactor.

The protein localises to the cytoplasm. It catalyses the reaction (6S)-NADHX + ATP = ADP + phosphate + NADH + H(+). The catalysed reaction is (6S)-NADPHX + ATP = ADP + phosphate + NADPH + H(+). Functionally, catalyzes the dehydration of the S-form of NAD(P)HX at the expense of ATP, which is converted to ADP. Together with NAD(P)HX epimerase, which catalyzes the epimerization of the S- and R-forms, the enzyme allows the repair of both epimers of NAD(P)HX, a damaged form of NAD(P)H that is a result of enzymatic or heat-dependent hydration. This is ATP-dependent (S)-NAD(P)H-hydrate dehydratase from Schizosaccharomyces pombe (strain 972 / ATCC 24843) (Fission yeast).